The primary structure comprises 182 residues: UPF0397 protein SPP_0507 (182 aa).

Transmembrane regions (helical) follow at residues 10–30 (VVAV…NIPT), 46–66 (LLSI…GHAI), 73–93 (YGLW…VGLF), 109–129 (ILIF…VLAP), and 148–168 (IVAG…LLLA).

Belongs to the UPF0397 family.

Its subcellular location is the cell membrane. The protein is UPF0397 protein SPP_0507 of Streptococcus pneumoniae (strain P1031).